Here is a 346-residue protein sequence, read N- to C-terminus: Uroporphyrinogen decarboxylase (346 aa).

Residues 23 to 27, aspartate 72, tyrosine 155, serine 209, and histidine 322 contribute to the substrate site; that span reads RQAGR.

Belongs to the uroporphyrinogen decarboxylase family. Homodimer.

It localises to the cytoplasm. The catalysed reaction is uroporphyrinogen III + 4 H(+) = coproporphyrinogen III + 4 CO2. Its pathway is porphyrin-containing compound metabolism; protoporphyrin-IX biosynthesis; coproporphyrinogen-III from 5-aminolevulinate: step 4/4. Functionally, catalyzes the decarboxylation of four acetate groups of uroporphyrinogen-III to yield coproporphyrinogen-III. The chain is Uroporphyrinogen decarboxylase from Anaeromyxobacter sp. (strain Fw109-5).